The following is a 320-amino-acid chain: PUP1 protein homolog (320 aa).

Transmembrane regions (helical) follow at residues 66-85 and 100-119; these read MWGGWLGFSAVFLTPFAYRY and FVLGVMALFFATNFAGRSMY. The tract at residues 205-320 is disordered; that stretch reads GGVFNGSPFM…QSGRYGGNRS (116 aa). The residue at position 230 (Ser-230) is a Phosphoserine. A compositionally biased stretch (polar residues) spans 253-266; it reads GDNSSSSSWENIRN. The segment covering 267–284 has biased composition (basic and acidic residues); that stretch reads TSRDQSQESDASVDHESD.

Belongs to the PUP1 family.

It is found in the mitochondrion membrane. This Saccharomyces cerevisiae (strain ATCC 204508 / S288c) (Baker's yeast) protein is PUP1 protein homolog.